We begin with the raw amino-acid sequence, 140 residues long: Large ribosomal subunit protein bL17 (140 aa).

This sequence belongs to the bacterial ribosomal protein bL17 family. In terms of assembly, part of the 50S ribosomal subunit. Contacts protein L32.

The chain is Large ribosomal subunit protein bL17 from Rhizorhabdus wittichii (strain DSM 6014 / CCUG 31198 / JCM 15750 / NBRC 105917 / EY 4224 / RW1) (Sphingomonas wittichii).